The chain runs to 385 residues: S-adenosylmethionine synthase (385 aa).

Position 15 (histidine 15) interacts with ATP. Aspartate 17 contributes to the Mg(2+) binding site. Glutamate 43 contributes to the K(+) binding site. Positions 56 and 99 each coordinate L-methionine. Residues 99–109 are flexible loop; sequence QSPDINKGINN. ATP-binding positions include 164-166, 230-231, aspartate 239, 245-246, alanine 262, and lysine 266; these read DAK, RF, and RK. Aspartate 239 provides a ligand contact to L-methionine. Lysine 270 lines the L-methionine pocket.

It belongs to the AdoMet synthase family. As to quaternary structure, homotetramer; dimer of dimers. It depends on Mg(2+) as a cofactor. K(+) serves as cofactor.

Its subcellular location is the cytoplasm. It catalyses the reaction L-methionine + ATP + H2O = S-adenosyl-L-methionine + phosphate + diphosphate. It functions in the pathway amino-acid biosynthesis; S-adenosyl-L-methionine biosynthesis; S-adenosyl-L-methionine from L-methionine: step 1/1. In terms of biological role, catalyzes the formation of S-adenosylmethionine (AdoMet) from methionine and ATP. The overall synthetic reaction is composed of two sequential steps, AdoMet formation and the subsequent tripolyphosphate hydrolysis which occurs prior to release of AdoMet from the enzyme. This chain is S-adenosylmethionine synthase, found in Baumannia cicadellinicola subsp. Homalodisca coagulata.